The chain runs to 495 residues: Dihydrolipoyl dehydrogenase, mitochondrial (495 aa).

Residues 59-68, lysine 77, and 169-171 each bind FAD; these read EKNATLGGTC and SGS. A disulfide bridge connects residues cysteine 68 and cysteine 73. NAD(+) is bound by residues 206–213, glutamate 229, valine 264, and glycine 299; that span reads GAGVIGLE. FAD contacts are provided by residues aspartate 340 and 346 to 349; that span reads MLAH. Histidine 472 serves as the catalytic Proton acceptor.

Belongs to the class-I pyridine nucleotide-disulfide oxidoreductase family. The cofactor is FAD.

The protein localises to the mitochondrion matrix. The catalysed reaction is N(6)-[(R)-dihydrolipoyl]-L-lysyl-[protein] + NAD(+) = N(6)-[(R)-lipoyl]-L-lysyl-[protein] + NADH + H(+). The sequence is that of Dihydrolipoyl dehydrogenase, mitochondrial (dld-1) from Caenorhabditis elegans.